A 344-amino-acid polypeptide reads, in one-letter code: Axoneme-associated protein mst101(1) (344 aa).

12 consecutive repeat copies span residues 74–89, 90–105, 106–121, 122–137, 138–153, 154–169, 170–185, 186–201, 202–217, 218–233, 234–249, and 250–265. The segment at 74-344 is 17 X 16 AA approximate tandem repeats of K-K-K-C-X-E-X-A-[KQ]-K-X-X-E-X-A-X; it reads KKKCAEAAKK…AAQKKCEPKK (271 aa). Residues 206–244 form a disordered region; it reads KEAAEKKKCEERAKKEKEAAEKKKCEERAKKEKEAAEKK. The 13; approximate repeat unit spans residues 266-281; that stretch reads AQKKKCAELAKKAKEA. A 14; approximate repeat occupies 282–297; that stretch reads AEKKKCAKKAGEKGSK. Basic and acidic residues predominate over residues 285–315; that stretch reads KKCAKKAGEKGSKQSGSDKGKKNGKKNDMKN. Residues 285–318 are disordered; sequence KKCAKKAGEKGSKQSGSDKGKKNGKKNDMKNKCA. A 15; approximate repeat occupies 298 to 313; that stretch reads QSGSDKGKKNGKKNDM. Copy 16 of the repeat occupies 314-329; sequence KNKCAMLAKKAKEEAL. The 17; truncated repeat unit spans residues 330–344; it reads KKKCAAAQKKCEPKK.

Testis. Located in spermatocytes and spermatid bundles.

Its subcellular location is the cytoplasm. In terms of biological role, possible structural role in the sperm tail. It is associated with axonemal structures. This chain is Axoneme-associated protein mst101(1) (mst101(1)), found in Drosophila hydei (Fruit fly).